Here is a 244-residue protein sequence, read N- to C-terminus: Small ribosomal subunit protein uS2 (244 aa).

It belongs to the universal ribosomal protein uS2 family.

This Buchnera aphidicola subsp. Acyrthosiphon pisum (strain 5A) protein is Small ribosomal subunit protein uS2.